The chain runs to 105 residues: Plastocyanin (105 aa).

Residues 1–105 (ETYTVKLGSD…GMVGKITVAG (105 aa)) form the Plastocyanin-like domain. Residues H39, C89, H92, and M97 each contribute to the Cu(2+) site.

It belongs to the plastocyanin family. Cu(2+) serves as cofactor.

It is found in the cellular thylakoid membrane. In terms of biological role, participates in electron transfer between P700 and the cytochrome b6-f complex in photosystem I. In Anabaena variabilis, this protein is Plastocyanin (petE).